Consider the following 298-residue polypeptide: 4-hydroxy-tetrahydrodipicolinate synthase (298 aa).

Position 48 (threonine 48) interacts with pyruvate. Residue tyrosine 137 is the Proton donor/acceptor of the active site. Catalysis depends on lysine 166, which acts as the Schiff-base intermediate with substrate. Pyruvate is bound at residue isoleucine 207.

It belongs to the DapA family. Homotetramer; dimer of dimers.

Its subcellular location is the cytoplasm. The enzyme catalyses L-aspartate 4-semialdehyde + pyruvate = (2S,4S)-4-hydroxy-2,3,4,5-tetrahydrodipicolinate + H2O + H(+). Its pathway is amino-acid biosynthesis; L-lysine biosynthesis via DAP pathway; (S)-tetrahydrodipicolinate from L-aspartate: step 3/4. Its function is as follows. Catalyzes the condensation of (S)-aspartate-beta-semialdehyde [(S)-ASA] and pyruvate to 4-hydroxy-tetrahydrodipicolinate (HTPA). This Campylobacter lari (strain RM2100 / D67 / ATCC BAA-1060) protein is 4-hydroxy-tetrahydrodipicolinate synthase.